A 103-amino-acid polypeptide reads, in one-letter code: UPF0132 membrane protein AF_0105 (103 aa).

The next 3 helical transmembrane spans lie at valine 5–glutamate 25, alanine 35–isoleucine 55, and isoleucine 58–isoleucine 78.

It belongs to the UPF0132 family.

The protein resides in the cell membrane. The protein is UPF0132 membrane protein AF_0105 of Archaeoglobus fulgidus (strain ATCC 49558 / DSM 4304 / JCM 9628 / NBRC 100126 / VC-16).